The following is a 205-amino-acid chain: Isochorismatase domain-containing protein 2 (205 aa).

Serine 7 and serine 202 each carry phosphoserine.

It belongs to the isochorismatase family. Interacts with CDKN2A.

The protein localises to the cytoplasm. It is found in the nucleus. This chain is Isochorismatase domain-containing protein 2 (ISOC2), found in Pongo abelii (Sumatran orangutan).